We begin with the raw amino-acid sequence, 417 residues long: UPF0597 protein FMG_0209 (417 aa).

This sequence belongs to the UPF0597 family.

The chain is UPF0597 protein FMG_0209 from Finegoldia magna (strain ATCC 29328 / DSM 20472 / WAL 2508) (Peptostreptococcus magnus).